A 366-amino-acid chain; its full sequence is 3-dehydroquinate synthase (366 aa).

Residues 69-74, 103-107, 127-128, Lys-140, and Lys-149 contribute to the NAD(+) site; these read DGEAFK, GVIGD, and TT. Residues Glu-182, His-245, and His-262 each contribute to the Zn(2+) site.

This sequence belongs to the sugar phosphate cyclases superfamily. Dehydroquinate synthase family. The cofactor is Co(2+). Requires Zn(2+) as cofactor. It depends on NAD(+) as a cofactor.

Its subcellular location is the cytoplasm. It carries out the reaction 7-phospho-2-dehydro-3-deoxy-D-arabino-heptonate = 3-dehydroquinate + phosphate. The protein operates within metabolic intermediate biosynthesis; chorismate biosynthesis; chorismate from D-erythrose 4-phosphate and phosphoenolpyruvate: step 2/7. In terms of biological role, catalyzes the conversion of 3-deoxy-D-arabino-heptulosonate 7-phosphate (DAHP) to dehydroquinate (DHQ). This chain is 3-dehydroquinate synthase, found in Pseudomonas fluorescens (strain Pf0-1).